The primary structure comprises 226 residues: Thioredoxin domain-containing protein 9 (226 aa).

The Thioredoxin domain maps to 74–180 (REIPSERDFF…TTETLEWRLG (107 aa)). Phosphoserine is present on residues serine 188, serine 221, and serine 223.

As to quaternary structure, forms ternary complexes with the chaperonin TCP1 complex, spanning the cylindrical chaperonin cavity and contacting at least 2 subunits.

It is found in the cytoplasm. The protein resides in the nucleus. The protein localises to the cytoskeleton. Its subcellular location is the microtubule organizing center. It localises to the centrosome. It is found in the midbody. Its function is as follows. Significantly diminishes the chaperonin TCP1 complex ATPase activity, thus negatively impacts protein folding, including that of actin or tubulin. The sequence is that of Thioredoxin domain-containing protein 9 (TXNDC9) from Homo sapiens (Human).